Here is a 240-residue protein sequence, read N- to C-terminus: Enolase-phosphatase E1 (240 aa).

Positions 9 and 11 each coordinate Mg(2+). Substrate contacts are provided by residues 129–130 (SS) and Lys-168. Asp-195 lines the Mg(2+) pocket.

Belongs to the HAD-like hydrolase superfamily. MasA/MtnC family. In terms of assembly, monomer. The cofactor is Mg(2+).

It localises to the cytoplasm. It is found in the nucleus. It catalyses the reaction 5-methylsulfanyl-2,3-dioxopentyl phosphate + H2O = 1,2-dihydroxy-5-(methylsulfanyl)pent-1-en-3-one + phosphate. It functions in the pathway amino-acid biosynthesis; L-methionine biosynthesis via salvage pathway; L-methionine from S-methyl-5-thio-alpha-D-ribose 1-phosphate: step 3/6. Its pathway is amino-acid biosynthesis; L-methionine biosynthesis via salvage pathway; L-methionine from S-methyl-5-thio-alpha-D-ribose 1-phosphate: step 4/6. In terms of biological role, bifunctional enzyme that catalyzes the enolization of 2,3-diketo-5-methylthiopentyl-1-phosphate (DK-MTP-1-P) into the intermediate 2-hydroxy-3-keto-5-methylthiopentenyl-1-phosphate (HK-MTPenyl-1-P), which is then dephosphorylated to form the acireductone 1,2-dihydroxy-3-keto-5-methylthiopentene (DHK-MTPene). The protein is Enolase-phosphatase E1 of Candida tropicalis (strain ATCC MYA-3404 / T1) (Yeast).